The sequence spans 505 residues: MSGIDFKQKISVQRPFGKPSSAEDEYEITRVFESDRGRIVNSAAIRRLQQKTQVFPLERNAAVRSRLTHSLEVQQVGRYIAKEILNRFKQDKKISAYGLDKLLDPFESIVEMACLMHDIGNPPFGHFGESAINNWFTKQMDPNGGGAEPRGKDQCLVNTLKLREGETELNILRSKIRQDLSHFEGNAQAIRLVYSLLKLNLTYAQVGCILKYTKPAYWSGDIPTSHNYLMKKPGFYLAEEEYVKDLRRELNMGEFNRFPLTYIMEAADDISYCIADLEDAVEKNIFSVEQLYDHMVQEWGETTHGDLFDKVVGGAFRQLGRGQGRRSSEDQFFMYLRVNTVGKLVPHAAQRFIENLPAVFSGSFNQALLEDSSPACKLLQIFKKVAVKHVFNYPEVEQLELQGYRVISGLLDIYSPLLAMPQTAFTQLVAEDSHREYPIETRLFHKLSTKHRLAYAESTERLRHLSPEQHEIYEYYYRARLIQDYISGMTDLYAYDEYRRLMAAE.

In terms of domain architecture, HD spans arginine 66 to cysteine 273.

The protein belongs to the dGTPase family. Type 1 subfamily. In terms of assembly, homotetramer. Mg(2+) serves as cofactor.

The catalysed reaction is dGTP + H2O = 2'-deoxyguanosine + triphosphate + H(+). Functionally, dGTPase preferentially hydrolyzes dGTP over the other canonical NTPs. The polypeptide is Deoxyguanosinetriphosphate triphosphohydrolase (Yersinia enterocolitica serotype O:8 / biotype 1B (strain NCTC 13174 / 8081)).